A 132-amino-acid polypeptide reads, in one-letter code: Large ribosomal subunit protein bL12 (132 aa).

The protein belongs to the bacterial ribosomal protein bL12 family. As to quaternary structure, homodimer. Part of the ribosomal stalk of the 50S ribosomal subunit. Forms a multimeric L10(L12)X complex, where L10 forms an elongated spine to which 2 to 4 L12 dimers bind in a sequential fashion. Binds GTP-bound translation factors.

In terms of biological role, forms part of the ribosomal stalk which helps the ribosome interact with GTP-bound translation factors. Is thus essential for accurate translation. In Ehrlichia canis (strain Jake), this protein is Large ribosomal subunit protein bL12.